Reading from the N-terminus, the 620-residue chain is Glutathione-regulated potassium-efflux system protein KefC (620 aa).

12 consecutive transmembrane segments (helical) span residues 4-24 (HTLI…PIAV), 26-46 (LGLG…PWGL), 54-74 (SILH…GLEL), 90-110 (GALQ…LLGL), 114-134 (VAEL…MQAM), 149-169 (FAVL…IPLL), 178-198 (MGAF…VVLL), 218-238 (VFSA…EEVG), 270-290 (GLLL…GTLI), 294-314 (LRIV…LWLI), 327-347 (WFAV…GAAQ), and 359-379 (SLTL…VILN). The 120-residue stretch at 399–518 (QPRVIIAGFG…AGVEKPERET (120 aa)) folds into the RCK N-terminal domain. The segment at 597-620 (GWQGTEEGKHTGNMADEPETKPSS) is disordered.

Belongs to the monovalent cation:proton antiporter 2 (CPA2) transporter (TC 2.A.37) family. KefC subfamily. As to quaternary structure, homodimer. Interacts with the regulatory subunit KefF.

It is found in the cell inner membrane. Functionally, pore-forming subunit of a potassium efflux system that confers protection against electrophiles. Catalyzes K(+)/H(+) antiport. The polypeptide is Glutathione-regulated potassium-efflux system protein KefC (Escherichia coli (strain SMS-3-5 / SECEC)).